We begin with the raw amino-acid sequence, 438 residues long: Protein translocase subunit SecY (438 aa).

A run of 10 helical transmembrane segments spans residues 18 to 38, 76 to 96, 121 to 141, 154 to 174, 177 to 197, 212 to 232, 269 to 289, 315 to 335, 375 to 395, and 398 to 418; these read ILFT…PSPG, VGVM…VVIP, IALA…GGLL, IFSL…VMWM, LITE…GIAA, GVIF…VVFV, VIPV…TQLV, PVYI…YVSV, LPGS…LQIG, and GEVQ…GVGL.

Belongs to the SecY/SEC61-alpha family. Component of the Sec protein translocase complex. Heterotrimer consisting of SecY, SecE and SecG subunits. The heterotrimers can form oligomers, although 1 heterotrimer is thought to be able to translocate proteins. Interacts with the ribosome. Interacts with SecDF, and other proteins may be involved. Interacts with SecA.

Its subcellular location is the cell membrane. Its function is as follows. The central subunit of the protein translocation channel SecYEG. Consists of two halves formed by TMs 1-5 and 6-10. These two domains form a lateral gate at the front which open onto the bilayer between TMs 2 and 7, and are clamped together by SecE at the back. The channel is closed by both a pore ring composed of hydrophobic SecY resides and a short helix (helix 2A) on the extracellular side of the membrane which forms a plug. The plug probably moves laterally to allow the channel to open. The ring and the pore may move independently. In Mycobacterium leprae (strain TN), this protein is Protein translocase subunit SecY.